Reading from the N-terminus, the 443-residue chain is Tol-Pal system protein TolB (443 aa).

An N-terminal signal peptide occupies residues 1–33; sequence MKIGIINTKIRTVFSAFACMIAASLVCTMPARA.

It belongs to the TolB family. In terms of assembly, the Tol-Pal system is composed of five core proteins: the inner membrane proteins TolA, TolQ and TolR, the periplasmic protein TolB and the outer membrane protein Pal. They form a network linking the inner and outer membranes and the peptidoglycan layer.

It localises to the periplasm. Functionally, part of the Tol-Pal system, which plays a role in outer membrane invagination during cell division and is important for maintaining outer membrane integrity. The chain is Tol-Pal system protein TolB from Brucella abortus (strain S19).